Reading from the N-terminus, the 476-residue chain is Proline--tRNA ligase 2 (476 aa).

It belongs to the class-II aminoacyl-tRNA synthetase family. ProS type 3 subfamily. As to quaternary structure, homodimer.

It is found in the cytoplasm. The catalysed reaction is tRNA(Pro) + L-proline + ATP = L-prolyl-tRNA(Pro) + AMP + diphosphate. In terms of biological role, catalyzes the attachment of proline to tRNA(Pro) in a two-step reaction: proline is first activated by ATP to form Pro-AMP and then transferred to the acceptor end of tRNA(Pro). In Bacillus cereus (strain ZK / E33L), this protein is Proline--tRNA ligase 2.